Consider the following 331-residue polypeptide: Probable mannose-1-phosphate guanylyltransferase 3 (331 aa).

Lysine 3 lines the diphosphate pocket. Glycine 66, asparagine 90, aspartate 92, glycine 127, and asparagine 154 together coordinate GDP-alpha-D-mannose.

This sequence belongs to the transferase hexapeptide repeat family.

It catalyses the reaction alpha-D-mannose 1-phosphate + GTP + H(+) = GDP-alpha-D-mannose + diphosphate. It participates in nucleotide-sugar biosynthesis; GDP-alpha-D-mannose biosynthesis; GDP-alpha-D-mannose from alpha-D-mannose 1-phosphate (GTP route): step 1/1. Functionally, catalyzes a reaction of the Smirnoff-Wheeler pathway, the major route to ascorbate biosynthesis in plants. In Arabidopsis thaliana (Mouse-ear cress), this protein is Probable mannose-1-phosphate guanylyltransferase 3.